Reading from the N-terminus, the 75-residue chain is Large ribosomal subunit protein bL31 (75 aa).

It belongs to the bacterial ribosomal protein bL31 family. Type A subfamily. Part of the 50S ribosomal subunit.

Binds the 23S rRNA. The polypeptide is Large ribosomal subunit protein bL31 (Rhodopseudomonas palustris (strain BisB18)).